A 204-amino-acid polypeptide reads, in one-letter code: Crossover junction endodeoxyribonuclease RuvC (204 aa).

Catalysis depends on residues Asp7, Glu68, and Asp141. Mg(2+) is bound by residues Asp7, Glu68, and Asp141. Positions 164–204 are disordered; it reads QAVAAHRTSGASRTPGAAGTPGPSRTPGAPGTSRTLKGRTA.

Belongs to the RuvC family. In terms of assembly, homodimer which binds Holliday junction (HJ) DNA. The HJ becomes 2-fold symmetrical on binding to RuvC with unstacked arms; it has a different conformation from HJ DNA in complex with RuvA. In the full resolvosome a probable DNA-RuvA(4)-RuvB(12)-RuvC(2) complex forms which resolves the HJ. It depends on Mg(2+) as a cofactor.

The protein resides in the cytoplasm. It catalyses the reaction Endonucleolytic cleavage at a junction such as a reciprocal single-stranded crossover between two homologous DNA duplexes (Holliday junction).. In terms of biological role, the RuvA-RuvB-RuvC complex processes Holliday junction (HJ) DNA during genetic recombination and DNA repair. Endonuclease that resolves HJ intermediates. Cleaves cruciform DNA by making single-stranded nicks across the HJ at symmetrical positions within the homologous arms, yielding a 5'-phosphate and a 3'-hydroxyl group; requires a central core of homology in the junction. The consensus cleavage sequence is 5'-(A/T)TT(C/G)-3'. Cleavage occurs on the 3'-side of the TT dinucleotide at the point of strand exchange. HJ branch migration catalyzed by RuvA-RuvB allows RuvC to scan DNA until it finds its consensus sequence, where it cleaves and resolves the cruciform DNA. This is Crossover junction endodeoxyribonuclease RuvC from Streptomyces griseus subsp. griseus (strain JCM 4626 / CBS 651.72 / NBRC 13350 / KCC S-0626 / ISP 5235).